We begin with the raw amino-acid sequence, 286 residues long: Polyamine aminopropyltransferase (286 aa).

Positions 5 to 238 (PLWHETLHDH…GIMTFAWASD (234 aa)) constitute a PABS domain. Q33 provides a ligand contact to S-methyl-5'-thioadenosine. Residues H64 and D88 each contribute to the spermidine site. S-methyl-5'-thioadenosine-binding positions include E108 and 140 to 141 (DG). Catalysis depends on D158, which acts as the Proton acceptor. Residue 158–161 (DCTD) participates in spermidine binding. P165 provides a ligand contact to S-methyl-5'-thioadenosine.

It belongs to the spermidine/spermine synthase family. Homodimer or homotetramer.

The protein localises to the cytoplasm. It catalyses the reaction S-adenosyl 3-(methylsulfanyl)propylamine + putrescine = S-methyl-5'-thioadenosine + spermidine + H(+). The protein operates within amine and polyamine biosynthesis; spermidine biosynthesis; spermidine from putrescine: step 1/1. Catalyzes the irreversible transfer of a propylamine group from the amino donor S-adenosylmethioninamine (decarboxy-AdoMet) to putrescine (1,4-diaminobutane) to yield spermidine. In Klebsiella pneumoniae (strain 342), this protein is Polyamine aminopropyltransferase.